Here is an 87-residue protein sequence, read N- to C-terminus: MENEAGQLVDLYVPRKCSATNRIIQAKDHASVQINVCAVDAEGRQIPGEKTTYAISGFVRSKGESDDCINRLTTQDGLLEGVWSYQR.

The residue at position 1 (Met1) is an N-acetylmethionine.

It belongs to the eukaryotic ribosomal protein eS21 family. As to quaternary structure, component of the small ribosomal subunit (SSU). Mature yeast ribosomes consist of a small (40S) and a large (60S) subunit. The 40S small subunit contains 1 molecule of ribosomal RNA (18S rRNA) and at least 33 different proteins. The large 60S subunit contains 3 rRNA molecules (25S, 5.8S and 5S rRNA) and at least 46 different proteins. Interacts with uS2A and uS2B, strongest interaction is with uS2B.

Its subcellular location is the cytoplasm. It localises to the nucleus. Functionally, component of the ribosome, a large ribonucleoprotein complex responsible for the synthesis of proteins in the cell. The small ribosomal subunit (SSU) binds messenger RNAs (mRNAs) and translates the encoded message by selecting cognate aminoacyl-transfer RNA (tRNA) molecules. The large subunit (LSU) contains the ribosomal catalytic site termed the peptidyl transferase center (PTC), which catalyzes the formation of peptide bonds, thereby polymerizing the amino acids delivered by tRNAs into a polypeptide chain. The nascent polypeptides leave the ribosome through a tunnel in the LSU and interact with protein factors that function in enzymatic processing, targeting, and the membrane insertion of nascent chains at the exit of the ribosomal tunnel. eS21 is required for the processing of the 20S rRNA-precursor to mature 18S rRNA in a late step of the maturation of 40S ribosomal subunits. Has a physiological role leading to 18S rRNA stability. The chain is Small ribosomal subunit protein eS21 (rps21) from Schizosaccharomyces pombe (strain 972 / ATCC 24843) (Fission yeast).